The sequence spans 474 residues: 4-aminobutyrate aminotransferase (474 aa).

Over residues 1–13 (MSSTATVTESTHF) the composition is skewed to polar residues. Positions 1–31 (MSSTATVTESTHFFPNEPQGPSIKTETIPGP) are disordered. Residue 142 to 143 (GS) coordinates pyridoxal 5'-phosphate. Substrate is bound at residue Arg-199. The residue at position 333 (Lys-333) is an N6-(pyridoxal phosphate)lysine. Pyridoxal 5'-phosphate is bound at residue Thr-357.

Belongs to the class-III pyridoxal-phosphate-dependent aminotransferase family. As to quaternary structure, homodimer. The cofactor is pyridoxal 5'-phosphate.

It is found in the cytoplasm. The catalysed reaction is 4-aminobutanoate + 2-oxoglutarate = succinate semialdehyde + L-glutamate. Required for the degradation of gamma-aminobutyric acid (GABA), which is important for utilization of GABA as nitrogen source. Deaminates GABA to succinate-semialdehyde, which in turn is converted to succinate by the succinate semialdehyde dehydrogenase. Cannot transaminate beta-alanine (BAL). The polypeptide is 4-aminobutyrate aminotransferase (uga1) (Schizosaccharomyces pombe (strain 972 / ATCC 24843) (Fission yeast)).